Reading from the N-terminus, the 256-residue chain is Acetyl-coenzyme A carboxylase carboxyl transferase subunit alpha (256 aa).

In terms of domain architecture, CoA carboxyltransferase C-terminal spans 1-236 (MTDVSRVLKE…KANLIEQITS (236 aa)).

It belongs to the AccA family. Acetyl-CoA carboxylase is a heterohexamer composed of biotin carboxyl carrier protein (AccB), biotin carboxylase (AccC) and two subunits each of ACCase subunit alpha (AccA) and ACCase subunit beta (AccD).

Its subcellular location is the cytoplasm. It catalyses the reaction N(6)-carboxybiotinyl-L-lysyl-[protein] + acetyl-CoA = N(6)-biotinyl-L-lysyl-[protein] + malonyl-CoA. It participates in lipid metabolism; malonyl-CoA biosynthesis; malonyl-CoA from acetyl-CoA: step 1/1. In terms of biological role, component of the acetyl coenzyme A carboxylase (ACC) complex. First, biotin carboxylase catalyzes the carboxylation of biotin on its carrier protein (BCCP) and then the CO(2) group is transferred by the carboxyltransferase to acetyl-CoA to form malonyl-CoA. This Streptococcus pyogenes serotype M2 (strain MGAS10270) protein is Acetyl-coenzyme A carboxylase carboxyl transferase subunit alpha.